Consider the following 72-residue polypeptide: Large ribosomal subunit protein bL28 (72 aa).

It belongs to the bacterial ribosomal protein bL28 family.

The protein is Large ribosomal subunit protein bL28 of Chlorobium limicola (strain DSM 245 / NBRC 103803 / 6330).